The chain runs to 159 residues: Insertion element IS136 uncharacterized 16.9 kDa protein (159 aa).

Residues 126 to 142 (RSFVSPSSSTPSTARSS) show a composition bias toward low complexity. The interval 126 to 159 (RSFVSPSSSTPSTARSSPGRPLPMQAFPAQTCAT) is disordered.

This Agrobacterium tumefaciens (strain T37) protein is Insertion element IS136 uncharacterized 16.9 kDa protein.